The chain runs to 65 residues: Large ribosomal subunit protein bL35 (65 aa).

This sequence belongs to the bacterial ribosomal protein bL35 family.

In Xanthomonas campestris pv. campestris (strain ATCC 33913 / DSM 3586 / NCPPB 528 / LMG 568 / P 25), this protein is Large ribosomal subunit protein bL35.